Reading from the N-terminus, the 1926-residue chain is Rho GTPase-activating protein 21-A (1926 aa).

The tract at residues 1–41 is disordered; sequence MATRRAIVPEQQQEPSSPASEISKNKDGQEQSEMVSPMEEE. The span at 10–22 shows a compositional bias: polar residues; it reads EQQQEPSSPASEI. Residues 77 to 162 form the PDZ domain; that stretch reads HTSIKDEENG…TLELSVMPKD (86 aa). Disordered regions lie at residues 211–236, 353–378, 416–487, 571–592, 640–704, and 868–905; these read VEVP…TTQP, PTAQ…QIDW, TDYN…RSES, QPTR…DRSG, FQRK…DSDA, and GKLG…DVFS. 3 stretches are compositionally biased toward polar residues: residues 216 to 236, 353 to 372, and 416 to 429; these read SGTS…TTQP, PTAQ…SPGP, and TDYN…FSGQ. Residues 441–451 are compositionally biased toward low complexity; the sequence is QQSVQMRQRSV. A compositionally biased stretch (basic and acidic residues) spans 452–466; that stretch reads SQERLEDPVLMKEWP. A compositionally biased stretch (polar residues) spans 468–479; the sequence is SASQDTLSSAVA. Over residues 640–669 the composition is skewed to polar residues; sequence FQRKTQTESASGFQLDSVKTSMSASSSPPA. In terms of domain architecture, PH spans 906-1019; the sequence is DSNKEGFLYF…WIKAIQENGN (114 aa). A compositionally biased stretch (polar residues) spans 1044–1064; it reads MSSASNKSEQSPKAPRQTLSI. Residues 1044–1107 form a disordered region; the sequence is MSSASNKSEQ…SPPKDKGSWR (64 aa). Over residues 1083–1105 the composition is skewed to basic and acidic residues; sequence PKQESERRLFSKDDISPPKDKGS. One can recognise a Rho-GAP domain in the interval 1126–1318; that stretch reads VRLDDCPPAH…TLIQKHDWFF (193 aa). 6 disordered regions span residues 1330 to 1381, 1396 to 1416, 1512 to 1540, 1573 to 1598, 1626 to 1658, and 1827 to 1915; these read VHEE…SGKD, ASRK…EDEL, QMEE…PKVV, LDPN…DERS, RQHR…TPRL, and STSE…LSGT. Positions 1512–1534 are enriched in polar residues; sequence QMEESMSDSGTMLSNSSQASAQR. Composition is skewed to polar residues over residues 1639–1653 and 1866–1902; these read VQAN…TEGS and TADI…NNFS.

It localises to the golgi apparatus membrane. The protein resides in the cell junction. The protein localises to the cytoplasmic vesicle membrane. It is found in the cytoplasm. Its subcellular location is the cytoskeleton. Its function is as follows. GTPase-activating protein (GAP) for rhoa and cdc42. The chain is Rho GTPase-activating protein 21-A (arhgap21-a) from Xenopus laevis (African clawed frog).